We begin with the raw amino-acid sequence, 129 residues long: Small ribosomal subunit protein uS8 (129 aa).

This sequence belongs to the universal ribosomal protein uS8 family. As to quaternary structure, part of the 30S ribosomal subunit. Contacts proteins S5 and S12.

One of the primary rRNA binding proteins, it binds directly to 16S rRNA central domain where it helps coordinate assembly of the platform of the 30S subunit. The chain is Small ribosomal subunit protein uS8 from Spiroplasma kunkelii.